Consider the following 753-residue polypeptide: Catalase-peroxidase (753 aa).

An N-terminal signal peptide occupies residues methionine 1–alanine 39. Residues tryptophan 118–tyrosine 241 constitute a cross-link (tryptophyl-tyrosyl-methioninium (Trp-Tyr) (with M-267)). Catalysis depends on histidine 119, which acts as the Proton acceptor. The tryptophyl-tyrosyl-methioninium (Tyr-Met) (with W-118) cross-link spans tyrosine 241–methionine 267. Histidine 282 is a heme b binding site.

The protein belongs to the peroxidase family. Peroxidase/catalase subfamily. In terms of assembly, homodimer or homotetramer. The cofactor is heme b. Post-translationally, formation of the three residue Trp-Tyr-Met cross-link is important for the catalase, but not the peroxidase activity of the enzyme.

It catalyses the reaction H2O2 + AH2 = A + 2 H2O. It carries out the reaction 2 H2O2 = O2 + 2 H2O. In terms of biological role, bifunctional enzyme with both catalase and broad-spectrum peroxidase activity. In Pseudoalteromonas atlantica (strain T6c / ATCC BAA-1087), this protein is Catalase-peroxidase.